Consider the following 499-residue polypeptide: Ethanolamine-phosphate phospho-lyase (499 aa).

Lys278 bears the N6-(pyridoxal phosphate)lysine mark.

This sequence belongs to the class-III pyridoxal-phosphate-dependent aminotransferase family. Homotetramer. It depends on pyridoxal 5'-phosphate as a cofactor.

The protein localises to the mitochondrion. The enzyme catalyses phosphoethanolamine + H2O = acetaldehyde + NH4(+) + phosphate. In terms of biological role, catalyzes the pyridoxal-phosphate-dependent breakdown of phosphoethanolamine, converting it to ammonia, inorganic phosphate and acetaldehyde. The chain is Ethanolamine-phosphate phospho-lyase (Etnppl) from Mus musculus (Mouse).